A 358-amino-acid polypeptide reads, in one-letter code: Photosystem II protein D1 (358 aa).

The next 3 helical transmembrane spans lie at 28–45 (YVGW…AAAI), 117–132 (HFLI…QWEL), and 141–155 (WICV…AAFA). Position 117 (histidine 117) interacts with chlorophyll a. Tryptophan 125 contributes to the pheophytin a binding site. 2 residues coordinate [CaMn4O5] cluster: aspartate 169 and glutamate 188. A helical transmembrane segment spans residues 196-217 (FHMIGVAGMFGGSLFSAMHGSL). Residue histidine 197 participates in chlorophyll a binding. A quinone is bound by residues histidine 214 and 263–264 (SF). Histidine 214 is a binding site for Fe cation. Histidine 271 contributes to the Fe cation binding site. The helical transmembrane segment at 273-287 (FLAAWPVICIWITSL) threads the bilayer. Histidine 331, glutamate 332, aspartate 341, and alanine 343 together coordinate [CaMn4O5] cluster. Residues 344-358 (AAESTPVALIAPAIG) constitute a propeptide that is removed on maturation.

Belongs to the reaction center PufL/M/PsbA/D family. As to quaternary structure, PSII is composed of 1 copy each of membrane proteins PsbA, PsbB, PsbC, PsbD, PsbE, PsbF, PsbH, PsbI, PsbJ, PsbK, PsbL, PsbM, PsbT, PsbX, PsbY, Psb30/Ycf12, peripheral proteins PsbO, CyanoQ (PsbQ), PsbU, PsbV and a large number of cofactors. It forms dimeric complexes. The D1/D2 heterodimer binds P680, chlorophylls that are the primary electron donor of PSII, and subsequent electron acceptors. It shares a non-heme iron and each subunit binds pheophytin, quinone, additional chlorophylls, carotenoids and lipids. D1 provides most of the ligands for the Mn4-Ca-O5 cluster of the oxygen-evolving complex (OEC). There is also a Cl(-1) ion associated with D1 and D2, which is required for oxygen evolution. The PSII complex binds additional chlorophylls, carotenoids and specific lipids. is required as a cofactor. Post-translationally, tyr-160 forms a radical intermediate that is referred to as redox-active TyrZ, YZ or Y-Z. C-terminally processed by CtpA; processing is essential to allow assembly of the oxygen-evolving complex and thus photosynthetic growth.

The protein resides in the cellular thylakoid membrane. It catalyses the reaction 2 a plastoquinone + 4 hnu + 2 H2O = 2 a plastoquinol + O2. Photosystem II (PSII) is a light-driven water:plastoquinone oxidoreductase that uses light energy to abstract electrons from H(2)O, generating O(2) and a proton gradient subsequently used for ATP formation. It consists of a core antenna complex that captures photons, and an electron transfer chain that converts photonic excitation into a charge separation. The D1/D2 (PsbA/PsbD) reaction center heterodimer binds P680, the primary electron donor of PSII as well as several subsequent electron acceptors. The sequence is that of Photosystem II protein D1 from Prochlorococcus marinus (strain MIT 9303).